Here is a 346-residue protein sequence, read N- to C-terminus: MLFDALLVLSFGGPEGPDQVMPFLENVTRGRGIPRERLASVAEHYLHFGGVSPINGINRALIGEIEAELGARGETLPVYFGNRNWDPYVEDAVTAMRDDGVRRAAVFATSAWGGYSSCTQYNEDIARGRAAAGDSAPQLVKLRHYFDHPLLVEMFAESIGVAAQSLPADLRDEARLLFTAHSIPVAADDRHGPNLYSRQVAYATRLVAAAAGYSEFDQVWQSRSGPPRIPWLEPDIGDHVAALAERGTKAVIICPIGFVADHIEVVWDLDSEVREQAADLGIAMARARTPNADRRYARLALDLVDELRGDRDPLRVAGVDPAPGCGYSVDGTTCADSPRCVARITG.

Residues Ser52 and Tyr121 each coordinate Fe-coproporphyrin III. Fe(2+) contacts are provided by His181 and Glu264.

Belongs to the ferrochelatase family.

It localises to the cytoplasm. It catalyses the reaction Fe-coproporphyrin III + 2 H(+) = coproporphyrin III + Fe(2+). It participates in porphyrin-containing compound metabolism; protoheme biosynthesis. Involved in coproporphyrin-dependent heme b biosynthesis. Catalyzes the insertion of ferrous iron into coproporphyrin III to form Fe-coproporphyrin III. The sequence is that of Coproporphyrin III ferrochelatase from Mycobacterium sp. (strain JLS).